Consider the following 807-residue polypeptide: Dynein axonemal intermediate chain 4 (807 aa).

Composition is skewed to polar residues over residues 1 to 11 (MHSSPTSTRKQ) and 22 to 31 (PRKSISFINP). Disordered regions lie at residues 1 to 44 (MHSS…AASN) and 300 to 320 (YSSK…DSES). Positions 32–43 (SKSSAGKGYAAS) are enriched in low complexity. The segment covering 308–317 (AKDRDPKIQD) has biased composition (basic and acidic residues). WD repeat units lie at residues 493–533 (QSSY…NIPV), 542–590 (KHLG…DCHD), 617–657 (SRQA…QYLE), 661–701 (GHKG…PFLS), 704–743 (PTTY…LDPL), and 749–788 (NPGI…TASD).

As to quaternary structure, part of the multisubunit axonemal dynein complex formed at least of two heavy chains and a number of intermediate and light chains. Associated with axonemal dynein subunits such as, DNAH2, DNAI3, and DYNLT1. Interacts with DYNLT1. Highly expressed in tissues containing motile cilia, including the trachea, lung, oviduct, and testis.

It is found in the cytoplasm. The protein localises to the cytoskeleton. Its subcellular location is the flagellum axoneme. The protein resides in the cilium axoneme. It localises to the dynein axonemal particle. In terms of biological role, plays a critical role in the assembly of axonemal dynein complex, thereby playing a role in ciliary motility. This is Dynein axonemal intermediate chain 4 (Dnai4) from Mus musculus (Mouse).